The chain runs to 311 residues: Porphobilinogen deaminase (311 aa).

C243 is modified (S-(dipyrrolylmethanemethyl)cysteine).

Belongs to the HMBS family. Monomer. It depends on dipyrromethane as a cofactor.

The enzyme catalyses 4 porphobilinogen + H2O = hydroxymethylbilane + 4 NH4(+). The protein operates within porphyrin-containing compound metabolism; protoporphyrin-IX biosynthesis; coproporphyrinogen-III from 5-aminolevulinate: step 2/4. Functionally, tetrapolymerization of the monopyrrole PBG into the hydroxymethylbilane pre-uroporphyrinogen in several discrete steps. The polypeptide is Porphobilinogen deaminase (Aliivibrio fischeri (strain ATCC 700601 / ES114) (Vibrio fischeri)).